The chain runs to 85 residues: uncharacterized protein (85 aa).

A run of 3 helical transmembrane segments spans residues 4–24, 27–47, and 61–81; these read LTLCWLALLALAVTGVLLGGA, SPWLLAAVLACAVAKGWLIGE, and RLLLAWPLLMALAVGAALYLA.

The protein resides in the cell membrane. This is an uncharacterized protein from Pseudomonas aeruginosa (strain ATCC 15692 / DSM 22644 / CIP 104116 / JCM 14847 / LMG 12228 / 1C / PRS 101 / PAO1).